The following is a 163-amino-acid chain: Small ribosomal subunit protein uS5 (163 aa).

The S5 DRBM domain occupies 8–71 (LIEKIVYLNR…EKARKEMISV (64 aa)).

It belongs to the universal ribosomal protein uS5 family. Part of the 30S ribosomal subunit. Contacts proteins S4 and S8.

Functionally, with S4 and S12 plays an important role in translational accuracy. In terms of biological role, located at the back of the 30S subunit body where it stabilizes the conformation of the head with respect to the body. The sequence is that of Small ribosomal subunit protein uS5 from Maridesulfovibrio salexigens (strain ATCC 14822 / DSM 2638 / NCIMB 8403 / VKM B-1763) (Desulfovibrio salexigens).